Consider the following 79-residue polypeptide: Three-finger toxin A2 (79 aa).

Residues 1–21 (MKTLLLTLVVVTIVCLDLGNS) form the signal peptide. Cystine bridges form between Cys24-Cys41, Cys34-Cys59, Cys63-Cys71, and Cys72-Cys77.

This sequence belongs to the three-finger toxin family. Short-chain subfamily. Expressed by the venom gland.

Its subcellular location is the secreted. The chain is Three-finger toxin A2 from Micrurus laticollaris (Balsas coral snake).